A 744-amino-acid chain; its full sequence is Cullin-1 (744 aa).

Residues Asp674–Asn736 form the Cullin neddylation domain.

This sequence belongs to the cullin family. As to quaternary structure, part of a SCF (SKP1-CUL1-F-box protein) E3 ubiquitin-protein ligase complex. Is able to form the SCF complex together with SKP1 and the rice black streaked dwarf virus RBSDV protein P7-2. Interacts with D3. In terms of processing, neddylated (rubylated). Deneddylation occurs upon interaction with the COP9 signalosome (CSN) complex. As to expression, expressed in dry seeds and coleoptiles.

Its function is as follows. Involved in ubiquitination and subsequent proteasomal degradation of target proteins. The chain is Cullin-1 from Oryza sativa subsp. japonica (Rice).